The primary structure comprises 647 residues: A-type voltage-gated potassium channel KCND1 (647 aa).

Over 1–183 the chain is Cytoplasmic; the sequence is MAAGVATWLP…RAFENPHTST (183 aa). An interaction with KCNIP1, KCNIP2, and other family members region spans residues 2–20; that stretch reads AAGVATWLPFARAAAVGWL. 3 residues coordinate Zn(2+): H104, C131, and C132. The segment at 144–164 is disordered; that stretch reads AQRLAEDEEAEQTGDGPALPA. The chain crosses the membrane as a helical span at residues 184 to 205; sequence AALVFYYVTGFFIAVSVIANVV. Over 206–230 the chain is Extracellular; it reads ETIPCRGPARRPPREQPCGDRFPLA. A helical membrane pass occupies residues 231 to 252; sequence FFCMDTACVLIFTGEYLLRLFA. At 253-263 the chain is on the cytoplasmic side; the sequence is APSRCRFLRSV. A helical transmembrane segment spans residues 264–284; that stretch reads MSLIDVVAILPYYIGLLVPKN. Residues 285–287 lie on the Extracellular side of the membrane; the sequence is EDV. Residues 288–308 form a helical; Voltage-sensor membrane-spanning segment; the sequence is SGAFVTLRVFRVFRIFKFSRH. At 309-323 the chain is on the cytoplasmic side; sequence SQGLRILGYTLKSCA. Residues 310–323 form an S4-S5 linker region; that stretch reads QGLRILGYTLKSCA. A helical membrane pass occupies residues 324–345; sequence SELGFLLFSLTMAIIIFATVMF. The Extracellular segment spans residues 346 to 359; it reads YAEKGTSKTNFTSI. The helical intramembrane region spans 360–371; the sequence is PAAFWYTIVTMT. Positions 372–377 match the Selectivity filter motif; that stretch reads TLGYGD. The stretch at 372–379 is an intramembrane region; sequence TLGYGDMV. At 380–386 the chain is on the extracellular side; it reads PSTIAGK. The chain crosses the membrane as a helical span at residues 387 to 415; the sequence is IFGSICSLSGVLVIALPVPVIVSNFSRIY. Over 416-647 the chain is Cytoplasmic; it reads HQNQRADKRR…LPETVKISSL (232 aa). Positions 474–489 are required for dendritic targeting; that stretch reads FEQQHHHLLHCLEKTT. Residues 510–520 are compositionally biased toward low complexity; the sequence is GRTSRSTSVSS. The tract at residues 510-531 is disordered; the sequence is GRTSRSTSVSSQPVGPSSLLSS. A compositionally biased stretch (polar residues) spans 521 to 530; sequence QPVGPSSLLS. Residue S555 is modified to Phosphoserine. 2 disordered regions span residues 564–584 and 601–634; these read GLRR…PHDS and IPTP…RLGT.

It belongs to the potassium channel family. D (Shal) (TC 1.A.1.2) subfamily. Kv4.1/KCND1 sub-subfamily. In terms of assembly, component of heteromultimeric potassium channels. Identified in potassium channel complexes containing KCND1, KCND2, KCND3, KCNIP1, KCNIP2, KCNIP3, KCNIP4, DPP6 and DPP10. As to expression, detected in carotid body chemoreceptor cells and in frontal cortex.

Its subcellular location is the cell membrane. It carries out the reaction K(+)(in) = K(+)(out). A-type voltage-gated potassium channel that mediates transmembrane potassium transport in excitable membranes in the brain. Mediates A-type current I(SA) in suprachiasmatic nucleus (SCN) neurons. Exhibits a low-threshold A-type current with a hyperpolarized steady-state inactivation midpoint and the recovery process was steeply voltage-dependent, with recovery being markedly faster at more negative potentials. May regulates repetitive firing rates in the suprachiasmatic nucleus (SCN) neurons and circadian rhythms in neuronal excitability and behavior. Contributes to the regulation of the circadian rhythm of action potential firing in suprachiasmatic nucleus neurons, which regulates the circadian rhythm of locomotor activity. The regulatory subunit KCNIP1 modulates the kinetics of channel inactivation, increases the current amplitudes and accelerates recovery from inactivation, shifts activation in a depolarizing direction. The regulatory subunit DPP10 decreases the voltage sensitivity of the inactivation channel gating. The chain is A-type voltage-gated potassium channel KCND1 from Oryctolagus cuniculus (Rabbit).